The sequence spans 90 residues: Acylphosphatase (90 aa).

The Acylphosphatase-like domain occupies 4–90; it reads TVHLRITGHV…KGQYKDFRIY (87 aa). Active-site residues include Arg-19 and Asn-37.

It belongs to the acylphosphatase family.

It carries out the reaction an acyl phosphate + H2O = a carboxylate + phosphate + H(+). The chain is Acylphosphatase (acyP) from Caldanaerobacter subterraneus subsp. tengcongensis (strain DSM 15242 / JCM 11007 / NBRC 100824 / MB4) (Thermoanaerobacter tengcongensis).